Here is a 274-residue protein sequence, read N- to C-terminus: Rhamnulose-1-phosphate aldolase (274 aa).

The active site involves Glu-117. His-141, His-143, and His-212 together coordinate Zn(2+).

The protein belongs to the aldolase class II family. RhaD subfamily. In terms of assembly, homotetramer. Zn(2+) is required as a cofactor.

The protein resides in the cytoplasm. The enzyme catalyses L-rhamnulose 1-phosphate = (S)-lactaldehyde + dihydroxyacetone phosphate. The protein operates within carbohydrate degradation; L-rhamnose degradation; glycerone phosphate from L-rhamnose: step 3/3. Functionally, catalyzes the reversible cleavage of L-rhamnulose-1-phosphate to dihydroxyacetone phosphate (DHAP) and L-lactaldehyde. This Yersinia pseudotuberculosis serotype IB (strain PB1/+) protein is Rhamnulose-1-phosphate aldolase.